The primary structure comprises 462 residues: A-type ATP synthase subunit B (462 aa).

Belongs to the ATPase alpha/beta chains family. As to quaternary structure, has multiple subunits with at least A(3), B(3), C, D, E, F, H, I and proteolipid K(x).

It is found in the cell membrane. Its function is as follows. Component of the A-type ATP synthase that produces ATP from ADP in the presence of a proton gradient across the membrane. The B chain is a regulatory subunit. This Pyrococcus abyssi (strain GE5 / Orsay) protein is A-type ATP synthase subunit B.